The primary structure comprises 123 residues: Small ribosomal subunit protein uS12 (123 aa).

The tract at residues 1–30 (MPTIQQLVRKGRQDKVEKNKTPALEGSPQR) is disordered. Residues 11-20 (GRQDKVEKNK) show a composition bias toward basic and acidic residues. Aspartate 89 is subject to 3-methylthioaspartic acid.

This sequence belongs to the universal ribosomal protein uS12 family. In terms of assembly, part of the 30S ribosomal subunit. Contacts proteins S8 and S17. May interact with IF1 in the 30S initiation complex.

Functionally, with S4 and S5 plays an important role in translational accuracy. Interacts with and stabilizes bases of the 16S rRNA that are involved in tRNA selection in the A site and with the mRNA backbone. Located at the interface of the 30S and 50S subunits, it traverses the body of the 30S subunit contacting proteins on the other side and probably holding the rRNA structure together. The combined cluster of proteins S8, S12 and S17 appears to hold together the shoulder and platform of the 30S subunit. The protein is Small ribosomal subunit protein uS12 (rpsL) of Streptomyces avermitilis (strain ATCC 31267 / DSM 46492 / JCM 5070 / NBRC 14893 / NCIMB 12804 / NRRL 8165 / MA-4680).